A 483-amino-acid chain; its full sequence is NADH-quinone oxidoreductase subunit N (483 aa).

Helical transmembrane passes span 13-33 (ALPEIFVLAMVSLILVIDAAV), 39-57 (YLAYGLSLVTLAGAAFLTV), 76-96 (PLSDVLKLFLYLTVAIVLVYS), 110-130 (FFVLALFALLGMMVMVSASHF), 131-151 (LTLYLGLELLSLSLYAMVALQ), 165-185 (FVLGALASGMLLYGMSMVYGV), 206-226 (IPLVFGIVFVVAGLAFKLGAV), 240-260 (PTAMTLFVGSAPKIAAFAFVV), 277-297 (MLVILAVLSMAIGNIAAIAQS), 302-322 (MFAYSTISHMGFMLLGVLAGS), 330-350 (MFYVLVYTLMTLGGFGMILLL), 373-393 (LAFVMLLLMFSMTGIPPTVGF), 406-426 (IGYVWLAVAAVLFSLVGAFYY), and 459-479 (LAVLALGILPQPLMAVCVQAI).

It belongs to the complex I subunit 2 family. In terms of assembly, NDH-1 is composed of 14 different subunits. Subunits NuoA, H, J, K, L, M, N constitute the membrane sector of the complex.

It is found in the cell inner membrane. The enzyme catalyses a quinone + NADH + 5 H(+)(in) = a quinol + NAD(+) + 4 H(+)(out). Functionally, NDH-1 shuttles electrons from NADH, via FMN and iron-sulfur (Fe-S) centers, to quinones in the respiratory chain. The immediate electron acceptor for the enzyme in this species is believed to be ubiquinone. Couples the redox reaction to proton translocation (for every two electrons transferred, four hydrogen ions are translocated across the cytoplasmic membrane), and thus conserves the redox energy in a proton gradient. The chain is NADH-quinone oxidoreductase subunit N from Thiobacillus denitrificans (strain ATCC 25259 / T1).